A 926-amino-acid chain; its full sequence is Piwi-like protein Ago3 (926 aa).

The disordered stretch occupies residues 1 to 62; it reads MADPGKGRGR…PSTSGVSIGG (62 aa). The span at 26-56 shows a compositional bias: low complexity; sequence SPSQSESQSPESTPEQSTAPSTIASATPSTS. The PAZ domain maps to 339-455; the sequence is TVLSLIKEVV…LIPELCQLTG (117 aa). A Piwi domain is found at 620-912; sequence LVVAICSTKR…LSYLVGQCVH (293 aa). Q672 is a binding site for Mg(2+). Active-site residues include D697, E735, D767, and H901. Residue L926 participates in Mg(2+) binding.

Belongs to the argonaute family. Piwi subfamily. In terms of assembly, interacts (when symmetrically methylated) with Papi/TDRKH. Interacts with Vasa. Requires Mg(2+) as cofactor. Post-translationally, arginine methylation is required for the interaction with Tudor domain-containing protein Papi/TDRKH. Highly expressed in the larval testis, pupal ovary and adult eggs.

The protein resides in the cytoplasm. Its function is as follows. Endoribonuclease that plays a central role during spermatogenesis by repressing transposable elements and preventing their mobilization, which is essential for the germline integrity. Plays an essential role in meiotic differentiation of spermatocytes, germ cell differentiation and in self-renewal of spermatogonial stem cells. Its presence in oocytes suggests that it may participate in similar functions during oogenesis in females. Acts via the piRNA metabolic process, which mediates the repression of transposable elements during meiosis by forming complexes composed of piRNAs and Piwi proteins and govern the methylation and subsequent repression of transposons. Directly binds piRNAs, a class of 24 to 30 nucleotide RNAs that are generated by a Dicer-independent mechanism and are primarily derived from transposons and other repeated sequence elements. Strongly prefers a have adenine at position 10 of their guide (g10A preference). Plays a key role in the piRNA amplification loop, also named ping-pong amplification cycle: antisense piRNA-bound Siwi and sense piRNA-bound Ago3 reciprocally cleave complementary transcripts, to couple the amplification of piRNAs with the repression of transposable elements. The polypeptide is Piwi-like protein Ago3 (AGO3) (Bombyx mori (Silk moth)).